A 553-amino-acid chain; its full sequence is Glycerol kinase 2 (553 aa).

Thr20 is a binding site for substrate. ATP is bound at residue Arg24. Substrate contacts are provided by Arg94, Tyr148, and Asp259. ATP contacts are provided by residues Thr281, Gly326, and 427–431 (GMTNN). The chain crosses the membrane as a helical span at residues 526–546 (IFSSMPLGFFIVSSMVMLIGA).

It belongs to the FGGY kinase family. As to quaternary structure, interacts with ARMC12 and PLD6.

It is found in the mitochondrion outer membrane. The protein localises to the cytoplasm. It carries out the reaction glycerol + ATP = sn-glycerol 3-phosphate + ADP + H(+). The protein operates within polyol metabolism; glycerol degradation via glycerol kinase pathway; sn-glycerol 3-phosphate from glycerol: step 1/1. Functionally, key enzyme in the regulation of glycerol uptake and metabolism. Essential for male fertility and sperm mitochondrial sheath formation. Required for proper arrangement of crescent-like mitochondria to form the mitochondrial sheath during spermatogenesis. Can induce mitochondrial clustering through interactions with PLD6 and up-regulation of phosphatidic acid synthesis in the mitochondria. This Macaca fascicularis (Crab-eating macaque) protein is Glycerol kinase 2 (GK2).